Reading from the N-terminus, the 476-residue chain is WASH complex subunit 1 (476 aa).

Residues 1-54 (MTTVAQKHFLEGQTYSVPLIQPDLRREEAVQQVADALQYLQKVSGDIFNRISQR) are required for WASH complex assembly. Disordered regions lie at residues 273 to 412 (SAPS…QGGD) and 427 to 476 (GISG…DWES). Residues 284–296 (TFSTESVEPSQAD) are compositionally biased toward polar residues. Residues 302 to 333 (LLPPPPPPPPPPPPVMPTTVPPPPPLPQPTAP) show a composition bias toward pro residues. The segment at 354–476 (QGAPKEVVNP…GEEDEDDWES (123 aa)) is VCA. Positions 366–388 (GRASLLESIRQAGGIGKANLRSV) constitute a WH2 domain. Residues 387–403 (SVKERKLEKKKQKEQEQ) show a composition bias toward basic and acidic residues. The span at 467-476 (GEEDEDDWES) shows a compositional bias: acidic residues.

This sequence belongs to the WASH1 family. Component of the WASH complex.

The protein resides in the early endosome membrane. It is found in the recycling endosome membrane. Functionally, acts as a nucleation-promoting factor at the surface of endosomes, where it recruits and activates the Arp2/3 complex to induce actin polymerization, playing a key role in the fission of tubules that serve as transport intermediates during endosome sorting. The sequence is that of WASH complex subunit 1 from Gallus gallus (Chicken).